The following is a 164-amino-acid chain: Putative 4-hydroxy-4-methyl-2-oxoglutarate aldolase (164 aa).

Substrate contacts are provided by residues 75 to 78 (GDLI) and arginine 97. Aspartate 98 provides a ligand contact to a divalent metal cation.

It belongs to the class II aldolase/RraA-like family. Homotrimer. A divalent metal cation is required as a cofactor.

The catalysed reaction is 4-hydroxy-4-methyl-2-oxoglutarate = 2 pyruvate. The enzyme catalyses oxaloacetate + H(+) = pyruvate + CO2. Functionally, catalyzes the aldol cleavage of 4-hydroxy-4-methyl-2-oxoglutarate (HMG) into 2 molecules of pyruvate. Also contains a secondary oxaloacetate (OAA) decarboxylase activity due to the common pyruvate enolate transition state formed following C-C bond cleavage in the retro-aldol and decarboxylation reactions. The protein is Putative 4-hydroxy-4-methyl-2-oxoglutarate aldolase of Shewanella oneidensis (strain ATCC 700550 / JCM 31522 / CIP 106686 / LMG 19005 / NCIMB 14063 / MR-1).